A 795-amino-acid polypeptide reads, in one-letter code: Mitochondrial inner membrane m-AAA protease component paraplegin (795 aa).

The transit peptide at 1-43 directs the protein to the mitochondrion; it reads MAVLLLLLRALRRGPGPGPRPLWGPGPAWSPGFPARPGRGRPY. The propeptide at 44-105 is removed in mature form; sequence MASRPPGDLA…GGTFYFNTSR (62 aa). Residues 106-144 lie on the Mitochondrial matrix side of the membrane; sequence LKQKNKEKDKSKGKAPEEDEEERRRRERDDQMYRERLRT. A disordered region spans residues 108 to 133; sequence QKNKEKDKSKGKAPEEDEEERRRRER. Basic and acidic residues predominate over residues 109-133; sequence KNKEKDKSKGKAPEEDEEERRRRER. The chain crosses the membrane as a helical span at residues 145 to 165; it reads LLVIAVVMSLLNALSTSGGSI. Over 166-248 the chain is Mitochondrial intermembrane; the sequence is SWNDFVHEML…DRIPVSYKRT (83 aa). A helical transmembrane segment spans residues 249-269; that stretch reads GFFGNALYSVGMTAVGLAILW. Residues 270-795 lie on the Mitochondrial matrix side of the membrane; the sequence is YVFRLAGMTG…LGGEEPTWPK (526 aa). Residues A312, G352, C353, G354, K355, T356, and L357 each contribute to the ATP site. A 3'-nitrotyrosine modification is found at Y505. H574 provides a ligand contact to Zn(2+). Residue E575 is part of the active site. H578 and D650 together coordinate Zn(2+). The segment at 701-795 is interaction with PPIF; sequence HEARLLVAKA…LGGEEPTWPK (95 aa). The tract at residues 751–795 is disordered; sequence PHGPKKMIAPQRWIDAQREKQDLGEEETEETQQPPLGGEEPTWPK.

The protein in the N-terminal section; belongs to the AAA ATPase family. It in the C-terminal section; belongs to the peptidase M41 family. As to quaternary structure, forms heterooligomers with AFG3L2; the m-AAA protease is composed of heterohexamers of AFG3L2 and SPG7. Component of the mitochondrial permeability transition pore complex (mPTPC), at least composed of SPG7, VDAC1 and PPIF. Interacts with MAIP1. The cofactor is Zn(2+). In terms of processing, upon import into the mitochondrion, the N-terminal transit peptide is cleaved by the mitochondrial-processing peptidase (MPP) to generate an intermediate form which undergoes a second proteolytic cleavage mediated by proteases AFG3L2 removing an additional N-terminal fragment to generate the proteolytically active mature form. As to expression, ubiquitous.

It localises to the mitochondrion inner membrane. It catalyses the reaction ATP + H2O = ADP + phosphate + H(+). Its function is as follows. Catalytic component of the m-AAA protease, a protease that plays a key role in proteostasis of inner mitochondrial membrane proteins, and which is essential for axonal and neuron development. SPG7 possesses both ATPase and protease activities: the ATPase activity is required to unfold substrates, threading them into the internal proteolytic cavity for hydrolysis into small peptide fragments. The m-AAA protease exerts a dual role in the mitochondrial inner membrane: it mediates the processing of specific regulatory proteins and ensures protein quality control by degrading misfolded polypeptides. Mediates protein maturation of the mitochondrial ribosomal subunit MRPL32/bL32m by catalyzing the cleavage of the presequence of MRPL32/bL32m prior to assembly into the mitochondrial ribosome. Acts as a regulator of calcium in neurons by mediating degradation of SMDT1/EMRE before its assembly with the uniporter complex, limiting the availability of SMDT1/EMRE for MCU assembly and promoting efficient assembly of gatekeeper subunits with MCU. Also regulates mitochondrial calcium by catalyzing degradation of MCU. Plays a role in the formation and regulation of the mitochondrial permeability transition pore (mPTP) and its proteolytic activity is dispensable for this function. This is Mitochondrial inner membrane m-AAA protease component paraplegin from Homo sapiens (Human).